The chain runs to 401 residues: Mitochondrial distribution and morphology protein 12 (401 aa).

Residues 1-401 (MSIDINWDTL…VYPSFWTFLV (401 aa)) form the SMP-LTD domain. Residues 70 to 88 (YEEDEDYPDNEDDDDDEAG) show a composition bias toward acidic residues. 2 disordered regions span residues 70–95 (YEEDEDYPDNEDDDDDEAGLDSNPRN) and 190–247 (SLTL…EKSP). Residues 195 to 205 (PQSHPDPSSRP) are compositionally biased toward low complexity. A compositionally biased stretch (basic and acidic residues) spans 209–220 (HQHDDERRRSLA).

It belongs to the MDM12 family. In terms of assembly, component of the ER-mitochondria encounter structure (ERMES) or MDM complex, composed of MMM1, MDM10, MDM12 and MDM34. An MMM1 homodimer associates with one molecule of MDM12 on each side in a pairwise head-to-tail manner, and the SMP-LTD domains of MMM1 and MDM12 generate a continuous hydrophobic tunnel for phospholipid trafficking.

It is found in the mitochondrion outer membrane. The protein resides in the endoplasmic reticulum membrane. Its function is as follows. Component of the ERMES/MDM complex, which serves as a molecular tether to connect the endoplasmic reticulum (ER) and mitochondria. Components of this complex are involved in the control of mitochondrial shape and protein biogenesis, and function in nonvesicular lipid trafficking between the ER and mitochondria. MDM12 is required for the interaction of the ER-resident membrane protein MMM1 and the outer mitochondrial membrane-resident beta-barrel protein MDM10. The MDM12-MMM1 subcomplex functions in the major beta-barrel assembly pathway that is responsible for biogenesis of all mitochondrial outer membrane beta-barrel proteins, and acts in a late step after the SAM complex. The MDM10-MDM12-MMM1 subcomplex further acts in the TOM40-specific pathway after the action of the MDM12-MMM1 complex. Essential for establishing and maintaining the structure of mitochondria and maintenance of mtDNA nucleoids. This is Mitochondrial distribution and morphology protein 12 from Phaeosphaeria nodorum (strain SN15 / ATCC MYA-4574 / FGSC 10173) (Glume blotch fungus).